Here is a 206-residue protein sequence, read N- to C-terminus: Adenylyl-sulfate kinase (206 aa).

Residue 36-43 (GLSGSGKS) coordinates ATP. The active-site Phosphoserine intermediate is Ser110.

This sequence belongs to the APS kinase family.

It catalyses the reaction adenosine 5'-phosphosulfate + ATP = 3'-phosphoadenylyl sulfate + ADP + H(+). Its pathway is sulfur metabolism; hydrogen sulfide biosynthesis; sulfite from sulfate: step 2/3. Catalyzes the synthesis of activated sulfate. The protein is Adenylyl-sulfate kinase (cysC) of Buchnera aphidicola subsp. Acyrthosiphon pisum (strain APS) (Acyrthosiphon pisum symbiotic bacterium).